Reading from the N-terminus, the 669-residue chain is Zinc finger CCCH domain-containing protein 17 (669 aa).

Positions 1 to 11 are enriched in low complexity; it reads MFAPATQPQQQ. The disordered stretch occupies residues 1 to 23; it reads MFAPATQPQQQHEQKKQSETVSS. 3 consecutive C3H1-type zinc fingers follow at residues 34–58, 60–86, and 114–141; these read DCVYFLASPLTCKKGPECEYRHSEY, RMNPRDCYYWLNGNCLNPKCGFRHPPL, and AKQPVPCLFFQKGMCMKGDMCSFLHTPN. 4 disordered regions span residues 150–175, 285–306, 376–589, and 642–669; these read PVEAKPATDPQCSKKPIENNTEEKKL, VEDRYGRRSQERGNSEYDPDFS, GMRL…VMEE, and EEGEEEATEGGEGEGEEDIEKKTVEMLS. Composition is skewed to basic and acidic residues over residues 164 to 175, 285 to 299, 392 to 406, 420 to 464, 478 to 499, and 547 to 579; these read KPIENNTEEKKL, VEDRYGRRSQERGNS, SMDRGYRESRRDTPR, KLRE…EENH, RRREMEDERKSAPKSSREESKP, and NNKDETISKEEAGDEIKLITEEKTEVVSEPKAE. Acidic residues-rich tracts occupy residues 580–589 and 642–659; these read VEEEGTVMEE and EEGEEEATEGGEGEGEED. The span at 660-669 shows a compositional bias: basic and acidic residues; that stretch reads IEKKTVEMLS.

This Arabidopsis thaliana (Mouse-ear cress) protein is Zinc finger CCCH domain-containing protein 17.